A 120-amino-acid polypeptide reads, in one-letter code: MLIRYKKAFEKIAMGLLSFMPNEKDLKKLQQTMKQYETEEDRQLFLWKEEEDIIGLIGVLVVNEYEVEIHHISVNPSHRHQGIGKSMVKALRDIYPDKELIPNENTAAFIEKCEICHGSE.

The region spanning 3 to 120 (IRYKKAFEKI…EKCEICHGSE (118 aa)) is the N-acetyltransferase domain.

This is an uncharacterized protein from Bacillus methanolicus.